We begin with the raw amino-acid sequence, 266 residues long: MMKLNTVLSFKNIIGLMLIIFAGILFYAYILQHEWQYVTLSDEQVKKYRISGKKALSLYQLMKDTHELLTKNNIKYWIESGTLLGAVRHQGIIPFDDDLDIGIMHEDEIHLQQILPQFEQLGYTVSYERAYNICKKTCLDIFIVHKEKNKFIYTNIMLRDKYPEHFFYDHELYPLKKYKFGSIEVYGPSDPIGNLNRQYPEWDKYAIIYSPHSLHLPFLSNIEKKTKFILTPELLKPAQPLGPLEDNVNIVNSAKFIRIYKDIDDH.

A helical membrane pass occupies residues 13-33 (IIGLMLIIFAGILFYAYILQH).

Belongs to the LicD transferase family.

It is found in the membrane. This is an uncharacterized protein from Rickettsia prowazekii (strain Madrid E).